The primary structure comprises 139 residues: Small ribosomal subunit protein bS6 (139 aa).

The interval 118–139 (SFKGGSKIETPTGSESTDIQEK) is disordered. Residues 126–139 (ETPTGSESTDIQEK) are compositionally biased toward polar residues.

The protein belongs to the bacterial ribosomal protein bS6 family.

Functionally, binds together with bS18 to 16S ribosomal RNA. This is Small ribosomal subunit protein bS6 from Borrelia garinii subsp. bavariensis (strain ATCC BAA-2496 / DSM 23469 / PBi) (Borreliella bavariensis).